Reading from the N-terminus, the 320-residue chain is Cytochrome f (320 aa).

The N-terminal stretch at 1-35 (MQTRKTLSWIKEEITRSISVSLMIYIITGAYISNA) is a signal peptide. Tyr-36, Cys-56, Cys-59, and His-60 together coordinate heme. A helical membrane pass occupies residues 286 to 306 (VQGLLFFLASVILAQIFLVLK).

This sequence belongs to the cytochrome f family. The 4 large subunits of the cytochrome b6-f complex are cytochrome b6, subunit IV (17 kDa polypeptide, petD), cytochrome f and the Rieske protein, while the 4 small subunits are PetG, PetL, PetM and PetN. The complex functions as a dimer. Requires heme as cofactor.

It is found in the plastid. The protein localises to the chloroplast thylakoid membrane. Component of the cytochrome b6-f complex, which mediates electron transfer between photosystem II (PSII) and photosystem I (PSI), cyclic electron flow around PSI, and state transitions. This Populus alba (White poplar) protein is Cytochrome f.